The following is a 491-amino-acid chain: Probable cobyric acid synthase (491 aa).

In terms of domain architecture, GATase cobBQ-type spans 252–444 (PVEVNIVKFS…LHGILENFEF (193 aa)). C330 serves as the catalytic Nucleophile. H436 is a catalytic residue.

The protein belongs to the CobB/CobQ family. CobQ subfamily.

It participates in cofactor biosynthesis; adenosylcobalamin biosynthesis. In terms of biological role, catalyzes amidations at positions B, D, E, and G on adenosylcobyrinic A,C-diamide. NH(2) groups are provided by glutamine, and one molecule of ATP is hydrogenolyzed for each amidation. The chain is Probable cobyric acid synthase from Methanococcus vannielii (strain ATCC 35089 / DSM 1224 / JCM 13029 / OCM 148 / SB).